Here is a 65-residue protein sequence, read N- to C-terminus: Weak toxin CM-11 (65 aa).

Intrachain disulfides connect C3-C24, C6-C11, C17-C42, C46-C57, and C58-C63.

Belongs to the three-finger toxin family. Ancestral subfamily. Orphan group II sub-subfamily. As to expression, expressed by the venom gland.

Its subcellular location is the secreted. Functionally, binds with low affinity to muscular (alpha-1-beta-1-delta-epsilon/CHRNA1-CHRNB1-CHRND-CHRNE) and very low affinity to neuronal (alpha-7/CHRNA7) nicotinic acetylcholine receptor (nAChR). In Naja haje haje (Egyptian cobra), this protein is Weak toxin CM-11.